Reading from the N-terminus, the 1101-residue chain is Type VI secretion system component TssM1 (1101 aa).

The helical transmembrane segment at leucine 371–isoleucine 391 threads the bilayer.

Its subcellular location is the cell inner membrane. Its function is as follows. Core component of the type VI (T6SS) secretion system that plays a role in the release of toxins targeting both eukaryotic and prokaryotic species. Plays an essential role in stabilization of assembled TssK1 structure at a fixed perimembrane site. This is Type VI secretion system component TssM1 from Pseudomonas aeruginosa (strain ATCC 15692 / DSM 22644 / CIP 104116 / JCM 14847 / LMG 12228 / 1C / PRS 101 / PAO1).